We begin with the raw amino-acid sequence, 422 residues long: MSKSYVSRIVKVGNIKELNFRRSVSISQAPTGIQGDISTTTTYEENIKNAENLKAGNVLETAEFKALGTPQSVLSINCPPSVPVYLRRGSLLSIYGLNDSSSIKNVRSSINFINPIRRLLFGINTSSYQRLESTTPFSLLISATYRKFSIFKKSDNKSFVTISLDGSTDWSILYRDALQVYTGNSLTVSQYRVPRTISRKLSRTLNIPSNTTTGLFKWNKSGFIFLSGRGQVGLVGNGAIYNINLDDKEELLINRDNLLGLTVNGPFDLQNCVVEHNFTTHEKRSESSSVVQKPLGISVILKQQTTVRHKFKQIWSLFQYHLEASFSFLRGSRNKTNNFLVGNQNFVKIIGPRNLLLQSSSETSHIETPTPKRKNGVEVANVTGPKQTSADYLSYVTVTPGQGVKFESTPDFKDTVDKIERK.

The transit peptide at 1 to 23 (MSKSYVSRIVKVGNIKELNFRRS) directs the protein to the mitochondrion.

Belongs to the AIM24 family.

The protein localises to the mitochondrion. The protein is Altered inheritance of mitochondria protein 24, mitochondrial (AIM24) of Scheffersomyces stipitis (strain ATCC 58785 / CBS 6054 / NBRC 10063 / NRRL Y-11545) (Yeast).